A 363-amino-acid polypeptide reads, in one-letter code: tRNA/tmRNA (uracil-C(5))-methyltransferase (363 aa).

Residues Gln187, Tyr215, Asn220, Glu236, and Asp296 each contribute to the S-adenosyl-L-methionine site. Cys321 serves as the catalytic Nucleophile. Glu355 serves as the catalytic Proton acceptor.

This sequence belongs to the class I-like SAM-binding methyltransferase superfamily. RNA M5U methyltransferase family. TrmA subfamily.

The catalysed reaction is uridine(54) in tRNA + S-adenosyl-L-methionine = 5-methyluridine(54) in tRNA + S-adenosyl-L-homocysteine + H(+). It carries out the reaction uridine(341) in tmRNA + S-adenosyl-L-methionine = 5-methyluridine(341) in tmRNA + S-adenosyl-L-homocysteine + H(+). Dual-specificity methyltransferase that catalyzes the formation of 5-methyluridine at position 54 (m5U54) in all tRNAs, and that of position 341 (m5U341) in tmRNA (transfer-mRNA). In Haemophilus influenzae (strain 86-028NP), this protein is tRNA/tmRNA (uracil-C(5))-methyltransferase.